A 1022-amino-acid chain; its full sequence is Histone-lysine N-methyltransferase TRX1 (1022 aa).

The disordered stretch occupies residues 31–151; it reads SSAPCPLPKK…QRQGVHKEAA (121 aa). Pro residues predominate over residues 65–78; the sequence is EGPPPSPATAPPML. The span at 127 to 139 shows a compositional bias: basic and acidic residues; that stretch reads GGAERRGYFSEPK. The 64-residue stretch at 264–327 folds into the PWWP domain; that stretch reads PGDLVWAKLT…LKQAVPFLNG (64 aa). The segment covering 367-393 has biased composition (basic and acidic residues); the sequence is SMEKGSSDANSNKDVHSCDNLSEDKTA. Residues 367-399 form a disordered region; the sequence is SMEKGSSDANSNKDVHSCDNLSEDKTAESGGDY. The FYR N-terminal domain occupies 402 to 461; sequence MTPIELGNLRVSKLGRIVTDSDYFHNKKHIWPEGYTAFRKFRSVKDPHVVILYKMEVLRN. Residues 465–548 form the FYR C-terminal domain; the sequence is KARPLFRVTS…SCLKYFENAG (84 aa). A Phorbol-ester/DAG-type zinc finger spans residues 553 to 609; sequence GYRAVHVNWKDLDYCSVCDMDEEYEDNLFLQCDKCRMMVHARCYGELEPLNGVLWLC. PHD-type zinc fingers lie at residues 564–615 and 677–744; these read LDYC…CRPE and LLCS…KKHR. Residues 620-744 form an extended PHD domain (ePHD) region; that stretch reads SPRCCLCPVT…RLLSYCKKHR (125 aa). The region spanning 861 to 979 is the SET domain; that stretch reads RRLAFGKSRI…PWEELTYDYR (119 aa). Cys-943 lines the Zn(2+) pocket. Residue Tyr-978 participates in S-adenosyl-L-methionine binding. The region spanning 985–1001 is the Post-SET domain; it reads QRLPCYCGFPKCRGVVN. The Zn(2+) site is built by Cys-989, Cys-991, and Cys-996.

The protein belongs to the class V-like SAM-binding methyltransferase superfamily. Histone-lysine methyltransferase family. TRX/MLL subfamily. In terms of assembly, interacts with EHD3. As to expression, expressed in leaf blades and panicles.

Its subcellular location is the nucleus. The catalysed reaction is L-lysyl(4)-[histone H3] + S-adenosyl-L-methionine = N(6)-methyl-L-lysyl(4)-[histone H3] + S-adenosyl-L-homocysteine + H(+). In terms of biological role, possesses histone H3 methyltransferase activity in vitro. Methylates 'Lys-4' of histone H3. H3 'Lys-4' methylation represents a specific tag for epigenetic transcriptional activation. Functions as a receptor for the lipid messenger phosphatidylinositol 5-phosphate (PI5P), which negatively regulates its transcriptional activation activity. Involved in the regulation of flowering time and floral induction under long day (LD) conditions. Acts as an activator of flowering under LD conditions. May function through binding to EHD3, a repressor of GHD7. The protein is Histone-lysine N-methyltransferase TRX1 of Oryza sativa subsp. japonica (Rice).